We begin with the raw amino-acid sequence, 64 residues long: Large ribosomal subunit protein bL35 (64 aa).

This sequence belongs to the bacterial ribosomal protein bL35 family.

The sequence is that of Large ribosomal subunit protein bL35 from Micrococcus luteus (strain ATCC 4698 / DSM 20030 / JCM 1464 / CCM 169 / CCUG 5858 / IAM 1056 / NBRC 3333 / NCIMB 9278 / NCTC 2665 / VKM Ac-2230) (Micrococcus lysodeikticus).